The chain runs to 600 residues: Aspartate--tRNA(Asp/Asn) ligase (600 aa).

An L-aspartate-binding site is contributed by E176. Residues 200–203 (QQFK) are aspartate. Residues R222 and H452 each coordinate L-aspartate. 222–224 (RDE) provides a ligand contact to ATP. ATP is bound at residue E490. Position 497 (R497) interacts with L-aspartate. 542 to 545 (GIDR) contributes to the ATP binding site.

The protein belongs to the class-II aminoacyl-tRNA synthetase family. Type 1 subfamily. As to quaternary structure, homodimer.

The protein resides in the cytoplasm. It carries out the reaction tRNA(Asx) + L-aspartate + ATP = L-aspartyl-tRNA(Asx) + AMP + diphosphate. Functionally, aspartyl-tRNA synthetase with relaxed tRNA specificity since it is able to aspartylate not only its cognate tRNA(Asp) but also tRNA(Asn). Reaction proceeds in two steps: L-aspartate is first activated by ATP to form Asp-AMP and then transferred to the acceptor end of tRNA(Asp/Asn). This is Aspartate--tRNA(Asp/Asn) ligase from Rickettsia felis (strain ATCC VR-1525 / URRWXCal2) (Rickettsia azadi).